Reading from the N-terminus, the 499-residue chain is Glutamate--tRNA ligase (499 aa).

A 'HIGH' region motif is present at residues 12–22 (PSPTGHLHIGN). The 'KMSKS' region signature appears at 259–263 (KLSKR). Residue Lys-262 coordinates ATP.

Belongs to the class-I aminoacyl-tRNA synthetase family. Glutamate--tRNA ligase type 1 subfamily. Monomer.

The protein resides in the cytoplasm. The enzyme catalyses tRNA(Glu) + L-glutamate + ATP = L-glutamyl-tRNA(Glu) + AMP + diphosphate. In terms of biological role, catalyzes the attachment of glutamate to tRNA(Glu) in a two-step reaction: glutamate is first activated by ATP to form Glu-AMP and then transferred to the acceptor end of tRNA(Glu). In Lactobacillus acidophilus (strain ATCC 700396 / NCK56 / N2 / NCFM), this protein is Glutamate--tRNA ligase.